A 456-amino-acid chain; its full sequence is tRNA(Ile)-lysidine synthase (456 aa).

Position 28-33 (28-33 (SGGSDS)) interacts with ATP.

It belongs to the tRNA(Ile)-lysidine synthase family.

The protein resides in the cytoplasm. The enzyme catalyses cytidine(34) in tRNA(Ile2) + L-lysine + ATP = lysidine(34) in tRNA(Ile2) + AMP + diphosphate + H(+). Functionally, ligates lysine onto the cytidine present at position 34 of the AUA codon-specific tRNA(Ile) that contains the anticodon CAU, in an ATP-dependent manner. Cytidine is converted to lysidine, thus changing the amino acid specificity of the tRNA from methionine to isoleucine. This is tRNA(Ile)-lysidine synthase from Brucella anthropi (strain ATCC 49188 / DSM 6882 / CCUG 24695 / JCM 21032 / LMG 3331 / NBRC 15819 / NCTC 12168 / Alc 37) (Ochrobactrum anthropi).